We begin with the raw amino-acid sequence, 218 residues long: Deoxyribose-phosphate aldolase (218 aa).

Asp92 (proton donor/acceptor) is an active-site residue. Lys155 (schiff-base intermediate with acetaldehyde) is an active-site residue. Catalysis depends on Lys184, which acts as the Proton donor/acceptor.

Belongs to the DeoC/FbaB aldolase family. DeoC type 1 subfamily.

It localises to the cytoplasm. The enzyme catalyses 2-deoxy-D-ribose 5-phosphate = D-glyceraldehyde 3-phosphate + acetaldehyde. Its pathway is carbohydrate degradation; 2-deoxy-D-ribose 1-phosphate degradation; D-glyceraldehyde 3-phosphate and acetaldehyde from 2-deoxy-alpha-D-ribose 1-phosphate: step 2/2. Functionally, catalyzes a reversible aldol reaction between acetaldehyde and D-glyceraldehyde 3-phosphate to generate 2-deoxy-D-ribose 5-phosphate. The sequence is that of Deoxyribose-phosphate aldolase from Clostridium kluyveri (strain NBRC 12016).